The chain runs to 358 residues: DNA ligase C (358 aa).

K29 serves as the catalytic N6-AMP-lysine intermediate.

The protein belongs to the ATP-dependent DNA ligase family. A divalent metal cation is required as a cofactor.

It catalyses the reaction ATP + (deoxyribonucleotide)n-3'-hydroxyl + 5'-phospho-(deoxyribonucleotide)m = (deoxyribonucleotide)n+m + AMP + diphosphate.. In terms of biological role, DNA ligase that seals nicks in double-stranded DNA during DNA replication, DNA recombination and DNA repair. The sequence is that of DNA ligase C (ligC) from Mycobacterium tuberculosis (strain ATCC 25618 / H37Rv).